A 436-amino-acid chain; its full sequence is Proline transporter 3 (436 aa).

11 consecutive transmembrane segments (helical) span residues 29 to 49 (SWFQ…VLGY), 52 to 72 (TVMV…ATAI), 118 to 138 (LFMI…AVYV), 151 to 171 (FIAI…HLSA), 172 to 192 (LGIW…VAIV), 216 to 236 (LFTI…GMLP), 254 to 274 (LYFQ…IGYW), 296 to 316 (ALAN…FASP), 345 to 365 (GGYI…GDFM), 366 to 386 (SLTG…HMYY), and 405 to 425 (VVFF…LIAL).

It belongs to the amino acid/polyamine transporter 2 family. Amino acid/auxin permease (AAAP) (TC 2.A.18.3) subfamily. As to expression, expressed in epidermal cells of leaves, sepals and petals.

It is found in the cell membrane. Its function is as follows. Proline transporter that mediates proline and glycine betaine transport. When expressed in a heterologous system (yeast), imports L-proline, glycine betaine and GABA across the plasma membrane. The chain is Proline transporter 3 (PROT3) from Arabidopsis thaliana (Mouse-ear cress).